The sequence spans 142 residues: Large ribosomal subunit protein uL11 (142 aa).

This sequence belongs to the universal ribosomal protein uL11 family. As to quaternary structure, part of the ribosomal stalk of the 50S ribosomal subunit. Interacts with L10 and the large rRNA to form the base of the stalk. L10 forms an elongated spine to which L12 dimers bind in a sequential fashion forming a multimeric L10(L12)X complex. One or more lysine residues are methylated.

Forms part of the ribosomal stalk which helps the ribosome interact with GTP-bound translation factors. This chain is Large ribosomal subunit protein uL11, found in Bartonella tribocorum (strain CIP 105476 / IBS 506).